A 496-amino-acid chain; its full sequence is MDPTPALAEIVASLARVRVLCVGDVMLDRFVRGDVERISPEAPIPIVRVRDERAMLGGAGNVVRNIVALGGRCAFMAVIGEDRAGAEIGGLLGDEHKVDSFIGIQPNRRTSVKTRFFAGSQQLLRADDETIAPLDPYDADRLLGDVRSQITTVGALVLSDYGKGVLDGPVAASLIAMGRTQNLPVIVDPKGRDFTRYRGATVLTPNRKELAEATGLPTGTDDEVVTACRQVIARCGVDTVLATRSQDGMTLVGADGSVLHLPAEAREVYDVSGAGDTVVATLAAALAGGAPLAVACRLANLAAGIVVGRVGTAAVPAADLMAAVHQEEVSARDSKIVGAEDAREVVDKWRRHGLRIGFTNGCFDLLHPGHVSLLRQARAACDRLVVGLNSDASVRRLKGDSRPVQDETARAIVLASLADVDLVAVFGEDTPLGLITTLLPDVLVKGADYTVDTVVGSDVVLTNGGRVLLADLKAGFSTTSTIARLHGGSRRSGDTL.

Residues 1-331 (MDPTPALAEI…AAVHQEEVSA (331 aa)) form a ribokinase region. 206 to 209 (NRKE) serves as a coordination point for ATP. D276 is an active-site residue. The cytidylyltransferase stretch occupies residues 358–496 (FTNGCFDLLH…GGSRRSGDTL (139 aa)).

The protein in the N-terminal section; belongs to the carbohydrate kinase PfkB family. It in the C-terminal section; belongs to the cytidylyltransferase family. As to quaternary structure, homodimer.

It catalyses the reaction D-glycero-beta-D-manno-heptose 7-phosphate + ATP = D-glycero-beta-D-manno-heptose 1,7-bisphosphate + ADP + H(+). The catalysed reaction is D-glycero-beta-D-manno-heptose 1-phosphate + ATP + H(+) = ADP-D-glycero-beta-D-manno-heptose + diphosphate. It participates in nucleotide-sugar biosynthesis; ADP-L-glycero-beta-D-manno-heptose biosynthesis; ADP-L-glycero-beta-D-manno-heptose from D-glycero-beta-D-manno-heptose 7-phosphate: step 1/4. It functions in the pathway nucleotide-sugar biosynthesis; ADP-L-glycero-beta-D-manno-heptose biosynthesis; ADP-L-glycero-beta-D-manno-heptose from D-glycero-beta-D-manno-heptose 7-phosphate: step 3/4. Its function is as follows. Catalyzes the phosphorylation of D-glycero-D-manno-heptose 7-phosphate at the C-1 position to selectively form D-glycero-beta-D-manno-heptose-1,7-bisphosphate. In terms of biological role, catalyzes the ADP transfer from ATP to D-glycero-beta-D-manno-heptose 1-phosphate, yielding ADP-D-glycero-beta-D-manno-heptose. In Rhodospirillum rubrum (strain ATCC 11170 / ATH 1.1.1 / DSM 467 / LMG 4362 / NCIMB 8255 / S1), this protein is Bifunctional protein HldE.